Consider the following 395-residue polypeptide: Chorismate synthase (395 aa).

R40 and R46 together coordinate NADP(+). FMN-binding positions include 134–136, 256–257, G301, 316–320, and R342; these read RAS, QA, and KPIST.

This sequence belongs to the chorismate synthase family. In terms of assembly, homotetramer. Requires FMNH2 as cofactor.

The catalysed reaction is 5-O-(1-carboxyvinyl)-3-phosphoshikimate = chorismate + phosphate. Its pathway is metabolic intermediate biosynthesis; chorismate biosynthesis; chorismate from D-erythrose 4-phosphate and phosphoenolpyruvate: step 7/7. Its function is as follows. Catalyzes the anti-1,4-elimination of the C-3 phosphate and the C-6 proR hydrogen from 5-enolpyruvylshikimate-3-phosphate (EPSP) to yield chorismate, which is the branch point compound that serves as the starting substrate for the three terminal pathways of aromatic amino acid biosynthesis. This reaction introduces a second double bond into the aromatic ring system. This Beutenbergia cavernae (strain ATCC BAA-8 / DSM 12333 / CCUG 43141 / JCM 11478 / NBRC 16432 / NCIMB 13614 / HKI 0122) protein is Chorismate synthase.